A 273-amino-acid chain; its full sequence is Putative phosphoenolpyruvate synthase regulatory protein (273 aa).

153 to 160 (GVSRSGKT) lines the ADP pocket.

The protein belongs to the pyruvate, phosphate/water dikinase regulatory protein family. PSRP subfamily.

It carries out the reaction [pyruvate, water dikinase] + ADP = [pyruvate, water dikinase]-phosphate + AMP + H(+). It catalyses the reaction [pyruvate, water dikinase]-phosphate + phosphate + H(+) = [pyruvate, water dikinase] + diphosphate. Bifunctional serine/threonine kinase and phosphorylase involved in the regulation of the phosphoenolpyruvate synthase (PEPS) by catalyzing its phosphorylation/dephosphorylation. The protein is Putative phosphoenolpyruvate synthase regulatory protein of Leptothrix cholodnii (strain ATCC 51168 / LMG 8142 / SP-6) (Leptothrix discophora (strain SP-6)).